The primary structure comprises 196 residues: Peptidyl-tRNA hydrolase (196 aa).

Tyrosine 18 is a tRNA binding site. Histidine 23 acts as the Proton acceptor in catalysis. Residues phenylalanine 69, asparagine 71, and asparagine 117 each contribute to the tRNA site.

It belongs to the PTH family. Monomer.

It is found in the cytoplasm. It carries out the reaction an N-acyl-L-alpha-aminoacyl-tRNA + H2O = an N-acyl-L-amino acid + a tRNA + H(+). Its function is as follows. Hydrolyzes ribosome-free peptidyl-tRNAs (with 1 or more amino acids incorporated), which drop off the ribosome during protein synthesis, or as a result of ribosome stalling. Functionally, catalyzes the release of premature peptidyl moieties from peptidyl-tRNA molecules trapped in stalled 50S ribosomal subunits, and thus maintains levels of free tRNAs and 50S ribosomes. The sequence is that of Peptidyl-tRNA hydrolase from Aliivibrio salmonicida (strain LFI1238) (Vibrio salmonicida (strain LFI1238)).